A 447-amino-acid polypeptide reads, in one-letter code: Eukaryotic translation initiation factor 3 subunit E (447 aa).

The 169-residue stretch at 253-421 folds into the PCI domain; the sequence is LELFFNAGYI…GTVVMNHPPS (169 aa).

The protein belongs to the eIF-3 subunit E family. Component of the eukaryotic translation initiation factor 3 (eIF-3) complex.

Its subcellular location is the cytoplasm. Functionally, component of the eukaryotic translation initiation factor 3 (eIF-3) complex, which is involved in protein synthesis of a specialized repertoire of mRNAs and, together with other initiation factors, stimulates binding of mRNA and methionyl-tRNAi to the 40S ribosome. The eIF-3 complex specifically targets and initiates translation of a subset of mRNAs involved in cell proliferation. The chain is Eukaryotic translation initiation factor 3 subunit E from Chaetomium globosum (strain ATCC 6205 / CBS 148.51 / DSM 1962 / NBRC 6347 / NRRL 1970) (Soil fungus).